Consider the following 219-residue polypeptide: GTP-binding protein Rab-3D (219 aa).

Alanine 2 bears the N-acetylalanine mark. Residue 29-37 (GNSSVGKTS) coordinates GDP. Residues serine 31, serine 32, valine 33, glycine 34, lysine 35, threonine 36, serine 37, proline 49, and serine 53 each coordinate GTP. Threonine 36 contributes to the Mg(2+) binding site. Positions 49 to 58 (PAFVSTVGID) match the Switch 1 motif. Threonine 54 and aspartate 77 together coordinate Mg(2+). A GTP-binding site is contributed by glycine 80. The Switch 2 motif lies at 80–96 (GQERYRTITTAYYRGAM). Position 86 is a phosphothreonine (threonine 86). GTP-binding residues include asparagine 135, lysine 136, aspartate 138, alanine 166, and lysine 167. Residues 135 to 138 (NKCD) and 165 to 167 (SAK) contribute to the GDP site. Residue serine 190 is modified to Phosphoserine. The interval 190–219 (SLEPSSSPGSNGKGPALGDTPPPQPSSCGC) is disordered. Residues 193 to 203 (PSSSPGSNGKG) are compositionally biased toward low complexity. Residues 209–219 (TPPPQPSSCGC) are compositionally biased toward pro residues. 2 S-geranylgeranyl cysteine lipidation sites follow: cysteine 217 and cysteine 219. Cysteine 219 carries the post-translational modification Cysteine methyl ester; partial.

The protein belongs to the small GTPase superfamily. Rab family. Interacts with RIMS1, RIMS2, RPH3A and RPH3AL. Interacts with RAB3IP. The GTP-bound form interacts with REP15. Interacts with CHM; phosphorylation at Thr-86 disrupts this interaction. Interacts with MADD (via uDENN domain); the GTP-bound form is preferred for interaction. Mg(2+) is required as a cofactor. In terms of processing, in fetal glands the majority of the proteins are methylated, whereas in neonatal and adult glands, only 50% are methylated. Phosphorylation of Thr-86 in the switch II region by LRRK2 prevents the association of RAB regulatory proteins, including CHM. Highest levels found in lung.

Its subcellular location is the cell membrane. It carries out the reaction GTP + H2O = GDP + phosphate + H(+). Regulated by guanine nucleotide exchange factors (GEFs) which promote the exchange of bound GDP for free GTP. Regulated by GTPase activating proteins (GAPs) which increase the GTP hydrolysis activity. Inhibited by GDP dissociation inhibitors (GDIs) which prevent Rab-GDP dissociation. Its function is as follows. The small GTPases Rab are key regulators of intracellular membrane trafficking, from the formation of transport vesicles to their fusion with membranes. Rabs cycle between an inactive GDP-bound form and an active GTP-bound form that is able to recruit to membranes different sets of downstream effectors directly responsible for vesicle formation, movement, tethering and fusion. RAB3D may be involved in the insulin-induced exocytosis of GLUT4-containing vesicles in adipocytes. The protein is GTP-binding protein Rab-3D of Rattus norvegicus (Rat).